A 340-amino-acid polypeptide reads, in one-letter code: ATP-dependent 6-phosphofructokinase (340 aa).

ATP is bound at residue Gly-11. 21 to 25 is an ADP binding site; sequence RAVVR. ATP is bound by residues 72 to 73 and 102 to 105; these read RY and GDGS. Asp-103 is a Mg(2+) binding site. 125-127 is a substrate binding site; that stretch reads TID. Asp-127 (proton acceptor) is an active-site residue. An ADP-binding site is contributed by Arg-154. Substrate is bound by residues Arg-162 and 169 to 171; that span reads MGR. ADP is bound by residues 185–187, Lys-211, and 213–215; these read GAD and KNH. Residues Glu-222, Arg-244, and 250 to 253 each bind substrate; that span reads HIQR.

This sequence belongs to the phosphofructokinase type A (PFKA) family. ATP-dependent PFK group I subfamily. Prokaryotic clade 'B1' sub-subfamily. Homotetramer. Requires Mg(2+) as cofactor.

It is found in the cytoplasm. It carries out the reaction beta-D-fructose 6-phosphate + ATP = beta-D-fructose 1,6-bisphosphate + ADP + H(+). It functions in the pathway carbohydrate degradation; glycolysis; D-glyceraldehyde 3-phosphate and glycerone phosphate from D-glucose: step 3/4. Allosterically activated by ADP and other diphosphonucleosides, and allosterically inhibited by phosphoenolpyruvate. In terms of biological role, catalyzes the phosphorylation of D-fructose 6-phosphate to fructose 1,6-bisphosphate by ATP, the first committing step of glycolysis. This chain is ATP-dependent 6-phosphofructokinase, found in Lactococcus lactis subsp. lactis (Streptococcus lactis).